The sequence spans 488 residues: IQ domain-containing protein IQM1 (488 aa).

The disordered stretch occupies residues 20-46 (RTNSFKRDDTNRHQNSPKSTMERSLSF). Over residues 32-46 (HQNSPKSTMERSLSF) the composition is skewed to polar residues. Positions 106–135 (LDAAATTLQKVYKSYRTRRNLADCAVVVEE) constitute an IQ domain. Disordered regions lie at residues 377-403 (SFKS…EKEE) and 448-472 (SPRV…VRVS). Positions 388 to 403 (RKEVSEEVEIPSEKEE) are enriched in basic and acidic residues.

In terms of assembly, interacts (via IQ domain) with CAM5. In terms of tissue distribution, highly expressed in leaf mesophyll cells. Expressed in roots, rosette and cauline leaves, stems, flowers and siliques.

The protein localises to the cytoplasm. Its subcellular location is the nucleus. Functionally, involved in the modulation of stomatal movement. Promotes stomatal opening. May play a role in the regulation of chitin signaling. May be involved in biotic and abiotic stress responses. The sequence is that of IQ domain-containing protein IQM1 from Arabidopsis thaliana (Mouse-ear cress).